We begin with the raw amino-acid sequence, 525 residues long: Glutamyl-tRNA(Gln) amidotransferase subunit A, mitochondrial (525 aa).

Catalysis depends on charge relay system residues Lys-76 and Ser-168. The active-site Acyl-ester intermediate is the Ser-192.

The protein belongs to the amidase family. GatA subfamily. As to quaternary structure, subunit of the heterotrimeric GatCAB amidotransferase (AdT) complex, composed of A (QRSL1), B (GATB) and C (GATC) subunits.

The protein resides in the mitochondrion. It carries out the reaction L-glutamyl-tRNA(Gln) + L-glutamine + ATP + H2O = L-glutaminyl-tRNA(Gln) + L-glutamate + ADP + phosphate + H(+). Its function is as follows. Allows the formation of correctly charged Gln-tRNA(Gln) through the transamidation of misacylated Glu-tRNA(Gln) in the mitochondria. The reaction takes place in the presence of glutamine and ATP through an activated gamma-phospho-Glu-tRNA(Gln). This is Glutamyl-tRNA(Gln) amidotransferase subunit A, mitochondrial (Qrsl1) from Rattus norvegicus (Rat).